The sequence spans 71 residues: Sec-independent protein translocase protein TatA (71 aa).

Residues 1–21 (MGSFSIWHWLIVLVVVLLLFG) form a helical membrane-spanning segment. The disordered stretch occupies residues 47–71 (AEEAKTVEHRTDEPVGEVKQKASKS). Basic and acidic residues predominate over residues 49–71 (EAKTVEHRTDEPVGEVKQKASKS).

Belongs to the TatA/E family. As to quaternary structure, the Tat system comprises two distinct complexes: a TatABC complex, containing multiple copies of TatA, TatB and TatC subunits, and a separate TatA complex, containing only TatA subunits. Substrates initially bind to the TatABC complex, which probably triggers association of the separate TatA complex to form the active translocon.

The protein resides in the cell inner membrane. Part of the twin-arginine translocation (Tat) system that transports large folded proteins containing a characteristic twin-arginine motif in their signal peptide across membranes. TatA could form the protein-conducting channel of the Tat system. This is Sec-independent protein translocase protein TatA from Chelativorans sp. (strain BNC1).